We begin with the raw amino-acid sequence, 33 residues long: Brevinin-2LT (33 aa).

C27 and C33 are joined by a disulfide.

In terms of tissue distribution, expressed by the skin glands.

The protein localises to the secreted. In terms of biological role, has antibacterial activity. In Rana latastei (Italian agile frog), this protein is Brevinin-2LT.